The following is a 285-amino-acid chain: Eukaryotic translation initiation factor 3 subunit J (285 aa).

Disordered stretches follow at residues 1–86 (MSWD…QLDE) and 232–285 (QARL…DDFM). Residues 22–41 (WEDEEDDGPVLESWDVDPEE) show a composition bias toward acidic residues. A coiled-coil region spans residues 36-81 (DVDPEEEEKKKKEAKLQEAKRKAELKAKEDAEKAKKDAKRKELEQF). The span at 42–86 (EEKKKKEAKLQEAKRKAELKAKEDAEKAKKDAKRKELEQFDQLDE) shows a compositional bias: basic and acidic residues. Acidic residues predominate over residues 269–285 (DDMDDGQFDDLDDDDFM).

The protein belongs to the eIF-3 subunit J family. Component of the eukaryotic translation initiation factor 3 (eIF-3) complex.

The protein resides in the cytoplasm. Functionally, component of the eukaryotic translation initiation factor 3 (eIF-3) complex, which is involved in protein synthesis of a specialized repertoire of mRNAs and, together with other initiation factors, stimulates binding of mRNA and methionyl-tRNAi to the 40S ribosome. The eIF-3 complex specifically targets and initiates translation of a subset of mRNAs involved in cell proliferation. This chain is Eukaryotic translation initiation factor 3 subunit J, found in Candida albicans (strain SC5314 / ATCC MYA-2876) (Yeast).